The following is a 352-amino-acid chain: MNGTEGPYFYVPMSNATGVVRSPYEYPQYYLAPPWAYACLAAYMFFLILVGFPVNFLTLYVTIEHKKLRTPLNYILLNLAVADLFMVFGGFTTTMYTSLNGYFVFGRLGCNLEGFFATFGGINSLWCLVVLSIERWVVVCKPMSNFRFGENHAIMGVAFTWFMALACTVPPLVGWSRYIPEGMQCSCGIDYYTRAEGFNNESFVIYMFVVHFLTPLFVITFCYGRLVCTVKEAAAQQQESETTQRAEREVTRMVILMFIAYLVCWLPYASVSWWIFTNQGSEFGPIFMTVPAFFAKSSSIYNPVIYICLNKQFRHCMITTLCCGKNPFEEEEGASTTASKTEASSVSSVSPA.

The Extracellular portion of the chain corresponds to 1 to 36 (MNGTEGPYFYVPMSNATGVVRSPYEYPQYYLAPPWA). Residues Asn-2 and Asn-15 are each glycosylated (N-linked (GlcNAc...) asparagine). Residues 37–61 (YACLAAYMFFLILVGFPVNFLTLYV) form a helical membrane-spanning segment. The Cytoplasmic segment spans residues 62–73 (TIEHKKLRTPLN). A helical transmembrane segment spans residues 74-96 (YILLNLAVADLFMVFGGFTTTMY). The Extracellular segment spans residues 97–110 (TSLNGYFVFGRLGC). Cysteines 110 and 187 form a disulfide. Residues 111–133 (NLEGFFATFGGINSLWCLVVLSI) form a helical membrane-spanning segment. The 'Ionic lock' involved in activated form stabilization signature appears at 134–136 (ERW). Residues 134 to 152 (ERWVVVCKPMSNFRFGENH) lie on the Cytoplasmic side of the membrane. The helical transmembrane segment at 153–173 (AIMGVAFTWFMALACTVPPLV) threads the bilayer. Over 174-202 (GWSRYIPEGMQCSCGIDYYTRAEGFNNES) the chain is Extracellular. A helical transmembrane segment spans residues 203–224 (FVIYMFVVHFLTPLFVITFCYG). The Cytoplasmic portion of the chain corresponds to 225-252 (RLVCTVKEAAAQQQESETTQRAEREVTR). A helical transmembrane segment spans residues 253-274 (MVILMFIAYLVCWLPYASVSWW). The Extracellular portion of the chain corresponds to 275 to 286 (IFTNQGSEFGPI). Residues 287 to 308 (FMTVPAFFAKSSSIYNPVIYIC) form a helical membrane-spanning segment. Lys-296 carries the post-translational modification N6-(retinylidene)lysine. Residues 309–352 (LNKQFRHCMITTLCCGKNPFEEEEGASTTASKTEASSVSSVSPA) lie on the Cytoplasmic side of the membrane. Residues Cys-322 and Cys-323 are each lipidated (S-palmitoyl cysteine). Residues 331–352 (EEGASTTASKTEASSVSSVSPA) are disordered. Low complexity predominate over residues 334–352 (ASTTASKTEASSVSSVSPA).

This sequence belongs to the G-protein coupled receptor 1 family. Opsin subfamily. Phosphorylated on some or all of the serine and threonine residues present in the C-terminal region. Post-translationally, contains one covalently linked retinal chromophore.

The protein resides in the membrane. It localises to the cell projection. Its subcellular location is the cilium. The protein localises to the photoreceptor outer segment. Functionally, photoreceptor required for image-forming vision at low light intensity. While most salt water fish species use retinal as chromophore, most freshwater fish use 3-dehydroretinal, or a mixture of retinal and 3-dehydroretinal. Light-induced isomerization of 11-cis to all-trans retinal triggers a conformational change that activates signaling via G-proteins. Subsequent receptor phosphorylation mediates displacement of the bound G-protein alpha subunit by arrestin and terminates signaling. This is Rhodopsin (rho) from Psalidodon fasciatus (Banded astyanax).